Consider the following 211-residue polypeptide: MAPSRNGMILKPHFHKDWQRRVATWFNQPARKIRRRKARQAKARRIAPRPVAGPIRPIVRCPTVRYHKKVRAGRGFSLEELKLAGINKRFARTIGISVDPRRRNKSTESLQANVQRLKEYRSKLILFPRKPSAPKKGDSSPEELKMATQLSGPVMPIRNVFKREKARVISEEEKNFKAFASLRMARANARLFGIRAKRAKEAAEQDVEKKK.

The protein belongs to the eukaryotic ribosomal protein eL13 family. In terms of assembly, component of the 60S large ribosomal subunit (LSU).

Its subcellular location is the cytoplasm. In terms of biological role, component of the ribosome, a large ribonucleoprotein complex responsible for the synthesis of proteins in the cell. The small ribosomal subunit (SSU) binds messenger RNAs (mRNAs) and translates the encoded message by selecting cognate aminoacyl-transfer RNA (tRNA) molecules. The large subunit (LSU) contains the ribosomal catalytic site termed the peptidyl transferase center (PTC), which catalyzes the formation of peptide bonds, thereby polymerizing the amino acids delivered by tRNAs into a polypeptide chain. The nascent polypeptides leave the ribosome through a tunnel in the LSU and interact with protein factors that function in enzymatic processing, targeting, and the membrane insertion of nascent chains at the exit of the ribosomal tunnel. As part of the LSU, it is probably required for its formation and the maturation of rRNAs. This chain is Large ribosomal subunit protein eL13 (RPL13), found in Gallus gallus (Chicken).